The following is a 249-amino-acid chain: MKIDPIHQFNIEPLFTIGHIGHQTIAFTNSSLYMLIAVAIISLLMLASGAQLVPGRLQSVAEISYEFVASTIRSTAGSEGMKFFPLIFSLFMFICVSNLIGIIPYTFTISSHLIVTAALALLVFFTVLIYGVAKNGLKFFSIFVPHGVPGYILPLVMFIEILSFFLRPVSHSVRLFANMLAGHIALKVFAGFVAMLGFSLGALGWVGGVLPLALTVALYALEILVAFLQAYVFAILTCIYLNDAIHPGH.

A run of 6 helical transmembrane segments spans residues 33–53 (YMLI…AQLV), 83–103 (FFPL…IGII), 113–133 (LIVT…YGVA), 139–159 (FFSI…VMFI), 188–208 (VFAG…WVGG), and 216–236 (VALY…FAIL).

Belongs to the ATPase A chain family. F-type ATPases have 2 components, CF(1) - the catalytic core - and CF(0) - the membrane proton channel. CF(1) has five subunits: alpha(3), beta(3), gamma(1), delta(1), epsilon(1). CF(0) has three main subunits: a(1), b(2) and c(9-12). The alpha and beta chains form an alternating ring which encloses part of the gamma chain. CF(1) is attached to CF(0) by a central stalk formed by the gamma and epsilon chains, while a peripheral stalk is formed by the delta and b chains.

The protein localises to the cell inner membrane. Key component of the proton channel; it plays a direct role in the translocation of protons across the membrane. The protein is ATP synthase subunit a of Bradyrhizobium diazoefficiens (strain JCM 10833 / BCRC 13528 / IAM 13628 / NBRC 14792 / USDA 110).